The sequence spans 77 residues: Protein AC145 (77 aa).

It localises to the host nucleus. It is found in the virion. Its function is as follows. Plays a role in primary oral infection of the host. The polypeptide is Protein AC145 (Autographa californica nuclear polyhedrosis virus (AcMNPV)).